Here is a 396-residue protein sequence, read N- to C-terminus: 1-deoxy-D-xylulose 5-phosphate reductoisomerase (396 aa).

NADPH contacts are provided by threonine 10, glycine 11, serine 12, isoleucine 13, asparagine 38, and asparagine 123. Lysine 124 provides a ligand contact to 1-deoxy-D-xylulose 5-phosphate. Position 125 (glutamate 125) interacts with NADPH. Aspartate 149 contacts Mn(2+). Residues serine 150, glutamate 151, serine 185, and histidine 208 each coordinate 1-deoxy-D-xylulose 5-phosphate. Glutamate 151 provides a ligand contact to Mn(2+). An NADPH-binding site is contributed by glycine 214. 1-deoxy-D-xylulose 5-phosphate is bound by residues serine 221, asparagine 226, lysine 227, and glutamate 230. Glutamate 230 serves as a coordination point for Mn(2+).

It belongs to the DXR family. It depends on Mg(2+) as a cofactor. Mn(2+) serves as cofactor.

It catalyses the reaction 2-C-methyl-D-erythritol 4-phosphate + NADP(+) = 1-deoxy-D-xylulose 5-phosphate + NADPH + H(+). The protein operates within isoprenoid biosynthesis; isopentenyl diphosphate biosynthesis via DXP pathway; isopentenyl diphosphate from 1-deoxy-D-xylulose 5-phosphate: step 1/6. Catalyzes the NADPH-dependent rearrangement and reduction of 1-deoxy-D-xylulose-5-phosphate (DXP) to 2-C-methyl-D-erythritol 4-phosphate (MEP). This is 1-deoxy-D-xylulose 5-phosphate reductoisomerase from Shewanella halifaxensis (strain HAW-EB4).